The following is a 629-amino-acid chain: MFYQDPFDVIIIGGGHAGTEAAMAAARMGQQTLLLTHNIDTLGQMSCNPAIGGIGKGHLVKEVDALGGLMAKAIDHAGIQFRILNASKGPAVRATRAQADRVLYRQAVRTALENQPNLMIFQQAVEDLIVENDRVVGAVTQMGLKFRAKAVVLTVGTFLDGKIHIGLDNYSGGRAGDPPSISLSRRLRELPLRVNRLKTGTPPRIDARTIDFSVLAQQHGDTPIPVFSFMGNAAQHPQQVPCYITHTNEKTHDVIRNNLDRSPMYAGVIEGIGPRYCPSIEDKVMRFADRNQHQIFLEPEGLTSNEIYPNGISTSLPFDVQIQIVRSMQGMENAKIVRPGYAIEYDFFDPRDLKPTLESKFIQGLFFAGQINGTTGYEEAAAQGLLAGLNAARFSAEKEGWAPRRDQAYLGVLVDDLSTMGTKEPYRMFTSRAEYRLMLREDNADLRLTEMGRELGLVDDERWARFNEKLERIETERQRLKSTWVNPLADSVAEVNAHLAAPLSREASGEDLLRRPGMTYEQLVQMTPFAPGLDDAEAAEQVEIQIKYEGYIARQQDEIEKQQRNENTLLPEMLDYRQVTGLSNEVIAKLNDHKPVSIGQASRISGVTPAAISILLVWLKKQGMLRRSA.

Residues 13–18 (GGGHAG), valine 125, and serine 180 each bind FAD. 273–287 (GPRYCPSIEDKVMRF) contacts NAD(+). An FAD-binding site is contributed by glutamine 370.

It belongs to the MnmG family. Homodimer. Heterotetramer of two MnmE and two MnmG subunits. FAD is required as a cofactor.

The protein localises to the cytoplasm. Its function is as follows. NAD-binding protein involved in the addition of a carboxymethylaminomethyl (cmnm) group at the wobble position (U34) of certain tRNAs, forming tRNA-cmnm(5)s(2)U34. The polypeptide is tRNA uridine 5-carboxymethylaminomethyl modification enzyme MnmG (Enterobacter sp. (strain 638)).